A 637-amino-acid chain; its full sequence is Threonine--tRNA ligase (637 aa).

Residues 1-65 (MIAIQLPDGS…EADEALSIIT (65 aa)) form the TGS domain. Positions 246–537 (DHRKLGRELD…LIEEHAGALP (292 aa)) are catalytic. Zn(2+) contacts are provided by Cys337, His388, and His514.

Belongs to the class-II aminoacyl-tRNA synthetase family. In terms of assembly, homodimer. Zn(2+) serves as cofactor.

The protein localises to the cytoplasm. It carries out the reaction tRNA(Thr) + L-threonine + ATP = L-threonyl-tRNA(Thr) + AMP + diphosphate + H(+). Its function is as follows. Catalyzes the attachment of threonine to tRNA(Thr) in a two-step reaction: L-threonine is first activated by ATP to form Thr-AMP and then transferred to the acceptor end of tRNA(Thr). Also edits incorrectly charged L-seryl-tRNA(Thr). This Leptothrix cholodnii (strain ATCC 51168 / LMG 8142 / SP-6) (Leptothrix discophora (strain SP-6)) protein is Threonine--tRNA ligase.